The following is a 347-amino-acid chain: 4-hydroxy-2-oxovalerate aldolase (347 aa).

Positions 2–252 constitute a Pyruvate carboxyltransferase domain; sequence ILISDATLRD…DTRTTFERVM (251 aa). 10-11 provides a ligand contact to substrate; it reads RD. Residue aspartate 11 participates in Mn(2+) binding. Histidine 14 serves as the catalytic Proton acceptor. Residues serine 164 and histidine 191 each coordinate substrate. Histidine 191 and histidine 193 together coordinate Mn(2+).

This sequence belongs to the 4-hydroxy-2-oxovalerate aldolase family.

The catalysed reaction is (S)-4-hydroxy-2-oxopentanoate = acetaldehyde + pyruvate. This is 4-hydroxy-2-oxovalerate aldolase (mhpE) from Burkholderia pseudomallei (strain K96243).